The chain runs to 735 residues: DNA ligase 1 (735 aa).

Basic and acidic residues predominate over residues Met-1–Ala-11. The interval Met-1–Arg-23 is disordered. NAD(+) contacts are provided by residues Asp-48–Asp-52, Ser-97–Leu-98, and Glu-128. Lys-130 functions as the N6-AMP-lysine intermediate in the catalytic mechanism. Arg-151, Glu-188, Lys-305, and Lys-329 together coordinate NAD(+). Positions 423, 426, 442, and 448 each coordinate Zn(2+). The region spanning Glu-643–Ser-732 is the BRCT domain.

The protein belongs to the NAD-dependent DNA ligase family. LigA subfamily. Mg(2+) is required as a cofactor. Requires Mn(2+) as cofactor.

The catalysed reaction is NAD(+) + (deoxyribonucleotide)n-3'-hydroxyl + 5'-phospho-(deoxyribonucleotide)m = (deoxyribonucleotide)n+m + AMP + beta-nicotinamide D-nucleotide.. Functionally, DNA ligase that catalyzes the formation of phosphodiester linkages between 5'-phosphoryl and 3'-hydroxyl groups in double-stranded DNA using NAD as a coenzyme and as the energy source for the reaction. It is essential for DNA replication and repair of damaged DNA. The chain is DNA ligase 1 from Streptomyces coelicolor (strain ATCC BAA-471 / A3(2) / M145).